We begin with the raw amino-acid sequence, 471 residues long: Protein naked cuticle homolog 1 (471 aa).

Disordered stretches follow at residues 1-23 (MGKLHSKPAAVCKRRESPEGDSF) and 41-82 (QRCP…DEDD). Residue G2 is the site of N-myristoyl glycine attachment. The segment covering 62–75 (GTRELVGDTSREAL) has biased composition (basic and acidic residues). Residues 125 to 190 (QCDVSVEEDS…LRVKLTVAPD (66 aa)) form an interaction with DVL1, DVL2 and DVL3 region. In terms of domain architecture, EF-hand spans 131–166 (EEDSRQEWTFTLYDFDNNGKVTREDITSLLHTIYEV). The Ca(2+) site is built by D144, D146, N148, K150, and D155. 3 disordered regions span residues 273-314 (GPGS…QGVD), 337-382 (GTQD…SPSA), and 448-471 (QAVQRHEHHHHHEHHHHYHHFYQP). The span at 453–471 (HEHHHHHEHHHHYHHFYQP) shows a compositional bias: basic residues.

The protein belongs to the NKD family. As to quaternary structure, interacts with DVL1, DVL2, DVL3 and PPP2R3A. Highly expressed in lung. Also expressed in brain, heart, kidney, liver, skin, stomach and testis. Within the testis expression is found in the seminiferous epithelium and round and elongating spermatids.

Its subcellular location is the cell membrane. It is found in the cytoplasm. Its function is as follows. Cell autonomous antagonist of the canonical Wnt signaling pathway. May activate a second Wnt signaling pathway that controls planar cell polarity. Required for spermatogenesis. This is Protein naked cuticle homolog 1 (Nkd1) from Mus musculus (Mouse).